The sequence spans 124 residues: Large ribosomal subunit protein bL20 (124 aa).

It belongs to the bacterial ribosomal protein bL20 family.

Functionally, binds directly to 23S ribosomal RNA and is necessary for the in vitro assembly process of the 50S ribosomal subunit. It is not involved in the protein synthesizing functions of that subunit. The chain is Large ribosomal subunit protein bL20 (rplT) from Mycoplasma genitalium (strain ATCC 33530 / DSM 19775 / NCTC 10195 / G37) (Mycoplasmoides genitalium).